The chain runs to 487 residues: MLKSVFVLFLVNYLNSVRCLEVPDAKLEAIYPKGLRVSIPDDGYTLFAFHGKLNEEMEGLEAGHWSRDITKAKNGRWIFRDRNAKLKIGDKIYFWTYILKDGLGYRQDNGEWTVTGYVNEDGEPLDANFEPRSTASTAAPPQAGAGQAPGPSYPCELSVSEVSVPGFVCKGQMLFEDNFNKPLADGRIWTPEIMFPGEPDYPFNVYMKETDNLHVGNGNLVIKPMPLVTAFGEDAIWKTLDLSDRCTGLLGTAQCKRDPSDAIIVPPIVTAKINTKKTFAFKYGRVEISAKMPRGDWLVPLIQLEPVNKNYGIRNYVSGLLRVACVKGNTEYIKTLVGGPIMSEAEPYRTANLKEFISNEPWTNEFHNYTLEWSPDAITMAVDGIVYGRVTAPAGGFYKEANEQNVEAAARWIQGSNIAPFDDMFYISLGMDVGGVHEFPDEAINKPWKNTATKAMVNFWNARSQWNPTWLESEKALLVDYVRVYAL.

Residues 1 to 19 form the signal peptide; that stretch reads MLKSVFVLFLVNYLNSVRC. One can recognise a CBM39 domain in the interval 20-119; that stretch reads LEVPDAKLEA…GEWTVTGYVN (100 aa). The segment at 123 to 151 is disordered; that stretch reads EPLDANFEPRSTASTAAPPQAGAGQAPGP. The span at 133-150 shows a compositional bias: low complexity; it reads STASTAAPPQAGAGQAPG. One can recognise a GH16 domain in the interval 157–487; it reads LSVSEVSVPG…LVDYVRVYAL (331 aa). N-linked (GlcNAc...) asparagine glycosylation occurs at N368.

In terms of assembly, monomer. In terms of processing, N-glycosylated. Fat body and hemolymph.

Its subcellular location is the secreted. Functionally, involved in the recognition of invading microorganisms. Binds specifically to beta-1,3-glucan and activates the phenoloxidase cascade. Causes aggregation of invading microorganisms. This is Beta-1,3-glucan-binding protein 1 from Manduca sexta (Tobacco hawkmoth).